The following is a 536-amino-acid chain: Maintenance of mitochondrial morphology protein 1 (536 aa).

Topologically, residues 1 to 25 (MAGPSNQTQPPPPVLTQPSLSFTQG) are lumenal. Residues 26–46 (LLVGQLSVVLLIGAFIKFFIF) traverse the membrane as a helical segment. The Cytoplasmic portion of the chain corresponds to 47–536 (GEAPPHPSRN…GSMPDPVVVT (490 aa)). Disordered stretches follow at residues 52–135 (HPSR…SHQP), 275–331 (GPGT…ATAA), 416–467 (GRTG…GGSM), and 505–536 (YGGA…VVVT). Composition is skewed to polar residues over residues 69 to 81 (YSLN…SSPR), 88 to 105 (STSN…NTRS), and 112 to 121 (YSATPTNPTS). A compositionally biased stretch (basic residues) spans 122–132 (KHSRSRPHHSS). Residues 134–409 (QPESLDWFNV…EPRVQVVGLP (276 aa)) form the SMP-LTD domain. The segment covering 321-331 (TNTNTAGATAA) has biased composition (low complexity). Composition is skewed to gly residues over residues 442–467 (TAGG…GGSM) and 507–517 (GAQGGGGGGGR).

The protein belongs to the MMM1 family. Homodimer. Component of the ER-mitochondria encounter structure (ERMES) or MDM complex, composed of MMM1, MDM10, MDM12 and MDM34. An MMM1 homodimer associates with one molecule of MDM12 on each side in a pairwise head-to-tail manner, and the SMP-LTD domains of MMM1 and MDM12 generate a continuous hydrophobic tunnel for phospholipid trafficking.

The protein localises to the endoplasmic reticulum membrane. Functionally, component of the ERMES/MDM complex, which serves as a molecular tether to connect the endoplasmic reticulum (ER) and mitochondria. Components of this complex are involved in the control of mitochondrial shape and protein biogenesis, and function in nonvesicular lipid trafficking between the ER and mitochondria. The MDM12-MMM1 subcomplex functions in the major beta-barrel assembly pathway that is responsible for biogenesis of all outer membrane beta-barrel proteins, and acts in a late step after the SAM complex. The MDM10-MDM12-MMM1 subcomplex further acts in the TOM40-specific pathway after the action of the MDM12-MMM1 complex. Essential for establishing and maintaining the structure of mitochondria and maintenance of mtDNA nucleoids. The chain is Maintenance of mitochondrial morphology protein 1 from Ajellomyces dermatitidis (strain ER-3 / ATCC MYA-2586) (Blastomyces dermatitidis).